The following is a 972-amino-acid chain: FHF complex subunit HOOK-interacting protein 1B (972 aa).

Disordered stretches follow at residues 465–548 and 573–644; these read APSP…GELE and SAPY…SWPE. The residue at position 467 (Ser-467) is a Phosphoserine. Residues 478 to 501 are compositionally biased toward low complexity; the sequence is RGPGSPSVDSSSVTTVPRPSTPSR. 4 positions are modified to phosphoserine: Ser-510, Ser-523, Ser-529, and Ser-533. A compositionally biased stretch (low complexity) spans 523-535; that stretch reads SPGLSASPASSPG. Phosphoserine is present on residues Ser-859 and Ser-897.

The protein belongs to the FHIP family. As to quaternary structure, component of the FTS/Hook/FHIP complex (FHF complex), composed of AKTIP/FTS, FHIP1B, and one or more members of the Hook family of proteins HOOK1, HOOK2, and HOOK3. The FHF complex associates with the homotypic vesicular sorting complex (the HOPS complex).

Component of the FTS/Hook/FHIP complex (FHF complex). The FHF complex may function to promote vesicle trafficking and/or fusion via the homotypic vesicular protein sorting complex (the HOPS complex). FHF complex promotes the distribution of AP-4 complex to the perinuclear area of the cell. In Homo sapiens (Human), this protein is FHF complex subunit HOOK-interacting protein 1B.